Here is a 424-residue protein sequence, read N- to C-terminus: CinA-like protein (424 aa).

The protein belongs to the CinA family.

The sequence is that of CinA-like protein from Shewanella loihica (strain ATCC BAA-1088 / PV-4).